We begin with the raw amino-acid sequence, 136 residues long: Small ribosomal subunit protein uS12 (136 aa).

A 3-methylthioaspartic acid modification is found at Asp89. Residues 104–136 (TAGVNGRTQRRSKYGAKRPKPGQAAAAAKGKKK) form a disordered region. Residues 111-123 (TQRRSKYGAKRPK) are compositionally biased toward basic residues. Low complexity predominate over residues 124-136 (PGQAAAAAKGKKK).

This sequence belongs to the universal ribosomal protein uS12 family. As to quaternary structure, part of the 30S ribosomal subunit. Contacts proteins S8 and S17. May interact with IF1 in the 30S initiation complex.

Its function is as follows. With S4 and S5 plays an important role in translational accuracy. In terms of biological role, interacts with and stabilizes bases of the 16S rRNA that are involved in tRNA selection in the A site and with the mRNA backbone. Located at the interface of the 30S and 50S subunits, it traverses the body of the 30S subunit contacting proteins on the other side and probably holding the rRNA structure together. The combined cluster of proteins S8, S12 and S17 appears to hold together the shoulder and platform of the 30S subunit. The chain is Small ribosomal subunit protein uS12 from Parabacteroides distasonis (strain ATCC 8503 / DSM 20701 / CIP 104284 / JCM 5825 / NCTC 11152).